The sequence spans 179 residues: Adenine phosphoribosyltransferase (179 aa).

Belongs to the purine/pyrimidine phosphoribosyltransferase family. As to quaternary structure, homodimer.

The protein resides in the cytoplasm. It catalyses the reaction AMP + diphosphate = 5-phospho-alpha-D-ribose 1-diphosphate + adenine. The protein operates within purine metabolism; AMP biosynthesis via salvage pathway; AMP from adenine: step 1/1. In terms of biological role, catalyzes a salvage reaction resulting in the formation of AMP, that is energically less costly than de novo synthesis. The polypeptide is Adenine phosphoribosyltransferase (Helicobacter pylori (strain ATCC 700392 / 26695) (Campylobacter pylori)).